Reading from the N-terminus, the 359-residue chain is WAT1-related protein At4g28040 (359 aa).

Transmembrane regions (helical) follow at residues 10 to 30 (LALV…KAAF), 37 to 57 (TVFV…ISFI), 66 to 86 (PSLG…GVTV), 103 to 123 (ACAM…IVGF), 133 to 153 (SVAK…MTFL), 170 to 190 (WLLG…WLIL), 204 to 224 (TSAC…LALG), 240 to 260 (SCCI…AWIV), 266 to 286 (VFSA…GALY), and 292 to 312 (YLGS…VLWG). An EamA 1 domain is found at 18-131 (TSAGVALFTK…GFESIKRRSM (114 aa)). The 112-residue stretch at 199-310 (PDHLYTSACT…AIILGLYIVL (112 aa)) folds into the EamA 2 domain.

Belongs to the drug/metabolite transporter (DMT) superfamily. Plant drug/metabolite exporter (P-DME) (TC 2.A.7.4) family.

It is found in the membrane. This is WAT1-related protein At4g28040 from Arabidopsis thaliana (Mouse-ear cress).